The chain runs to 240 residues: Endo-chitosanase B (240 aa).

The N-terminal stretch at 1–17 (MRLSEILAVALVTGATA) is a signal peptide. Residue Asn86 is glycosylated (N-linked (GlcNAc...) asparagine).

Belongs to the glycosyl hydrolase 75 family.

The protein localises to the secreted. The enzyme catalyses Endohydrolysis of beta-(1-&gt;4)-linkages between D-glucosamine residues in a partly acetylated chitosan.. Functionally, chitosanase catalyzing the endo-type cleavage of chitosan, the deacylated form of chitin. Chitosanase may be crucial in the degradation of the deacetylated portion of chitin in the fungal cell wall. Chitoolisaccharides produced by the hydrolysis of partially N-acetylated chitosan are known to have many biological activities, including antibacterial activity, immune-enhancing effects, and elicitor activity. The polypeptide is Endo-chitosanase B (csnB) (Aspergillus oryzae (Yellow koji mold)).